A 355-amino-acid chain; its full sequence is MSLCTVEINLSTIKNNYLLLQDVCKTSLVGAAVKANGYGLGAIQISKALIEENCRHFFVASSEEGVNLRNALGLDINILVLNGVFEHDALELIEYNLTPVLNNLKQIEIWQKFSNLKNRLLPCYLHFNTGINRLGLSSDEIEQLINDRDLLKGLDLQYIISHLAISEEIDNPYNLEQLNRFKAYLQYFPNVKASLANSGGIFLGQDYHFDLARPGAALYGLNPLTKNPVTLKAPIIHLQNLTLDSHIGYNMTFTTKRDSVIATLPLGYADGFSRNFSNQGEVFINSRSVPIVGRVSMDLINIDVTDLPPSEIFLGQEAEIIGNYCTPNKIASIIGTIGYEVLTNLGSRYKRKYIG.

The active-site Proton acceptor; specific for D-alanine is Lys34. Residue Lys34 is modified to N6-(pyridoxal phosphate)lysine. Residue Arg133 coordinates substrate. Tyr249 functions as the Proton acceptor; specific for L-alanine in the catalytic mechanism. Position 297 (Met297) interacts with substrate.

Belongs to the alanine racemase family. Pyridoxal 5'-phosphate serves as cofactor.

It catalyses the reaction L-alanine = D-alanine. It functions in the pathway amino-acid biosynthesis; D-alanine biosynthesis; D-alanine from L-alanine: step 1/1. Its function is as follows. Catalyzes the interconversion of L-alanine and D-alanine. May also act on other amino acids. The polypeptide is Alanine racemase (alr) (Rickettsia rickettsii (strain Sheila Smith)).